The following is a 2605-amino-acid chain: MMLGLVQLLVGFVVAWEAVELVLRHGLLLSVFKLAILAALAAAAGCVAIIFFARAVAWVLQRAAKLSIGCRSYGFNYLRDITISSPKGAVESICIGEIRLGLRKPITQLGFTVLTHGPILQLQISDLDVVLRQPVKSTNKKKPAPRKPISTTTAKAKGKSKGQVKWRLITSMASLLSLSIVELRLKAPKAALGIKDLKTDISKTGGLDPVLNVQVNIIPLFVQALDSDSIGNNTLVFSKLDWWVSGQYCSAMDTSDHSSFLFEDISLSCDLHQRDKAIRVKNLDLMLGPIVVNLEEKLLAKKKPSASTVAEQKDEPSVDNKSAARSEGGKLASLNKKISMFPEKVSFNMSKLVLKFLPKDHGLSINNEIGSISLRCTRLQPQDFGEVTTHIRLETDVTEIHLLMDGATSVLEVVKVSTVVSANIPSQPALPVQAEVDIKISGFQCNLIVSRIKPLIRINSDKKKPLVLHENPQQKKAPKEKLALSLACTMSVPELTLVLHSLDDVPLYHCIFQSANVSASKMIDRGTQLHGKLGDLKFLVPSKHQQSMKEGASGTLLHISHSTLDLEQNDPGQDNDEDHAKSAISVNISGIRMHFCFSYLESLCATAMSYKVFMKSILPPKKRSVQENASQKSTKKAKRALLLKINVAQCSIVYDGEMRLEDMSIADPKRVNFGSQGGRVVIINEANGSPRMAYVNSTSLPDHKNVHFSTSLEIYQFGVSLNKAKHTMQVELENFRLTHKEDQLDNKPVEETKLFDVRKAKFVQRSGGLNDIAACSLINVTDIAVRWEPDPYLELLEVATRLKSVLHRMKLQNSVTEVKDNIEHGYSFQKGITLRPWSARKAQKKRESVIAIDLESLKISGELADGVEAMITVGYIFSENAKIGVLVEGISVSFCGAWILKSSRMQLSRIPISVSDSNSDKKLQSAAACDWVIQCRDVNICLPFRLQLRAIDDAVEDTLRAFKLISAAKTSVLFPEKKSSTTSSKKSKPKSTAFRYVRIIVRDLIAEIEEEPMQGWLDEHMILMKNVFCESTVRLNLLDELSSGKNKDSPKAKLDSSEKNSGCPDVDAYVPGTHSIEKLREEIYRQAFQSYYQACQKLPVSEGSGACSSGFQSGFKMSTRRASVMSVCAKDVDVSLSKIDGGDEGMISFIKSLDPVCDKDDIPFSRLYGSNFSLKTRSLSAYLRDYTFPLFSGTNGKCDGRLVLGQQATCFQPQARQDVYVGKWWRVNLLRSATGYTPPMKTYADIPLYFKKAEVSFGVGYEPVFADVSYAFTCALRRANLAKRWYFERPEPPRRERSLPWWDDMRNYIHGKFKLCFNETKWHLPASTSPYEKLDELLIITDFMEIHYVDGYVSLSSKYLRVYLTSLESLAKKSSLEIPHHPAIPFLETPSFFMDISIEWGCDSGNPMDHFIFALPAEGKPRDKVFDAFRSTSLSLKWSFSLKPYTTEPIEHQKKSNLNTTAPTVNVGVHDLAWLMKWWNLVFLPPHKLRLFSRFPRFGVPRFVRSGNLPLDRVMTEQCIRFDAMQLQINNMPLQADDPAKGLTLHFTKFRYEIAFSRGKQIFTFDCKREPLDLVYQGIDLHLLKVFINRIPESSTSMDSKIENKVLQTKDKDSLGCEKGKKKTSPTEKSRDDGFFLYSDYFTIRKQTPKADAARLSAWQEDGRKKTEMPLIKSEFDGGDESDHDQSGSDDEGFNVVVADSCQRVFVYGLKILWNLENRAAVLSWVGGLTQAFQPPKPSPSRQYTQTKILEKKQLIKEAEMSKDGALSSVSSTSQPSEPQQIKSSESPPSNGSGKPDLTSSSENALKRSNNSDSEEEGTRHFMVNVVQPQFNLHSEEANGRFLLAAGSGRVMVRSFHSIVQVGQEMFEKAIGSSNDATGGTGPEMTWSRVELSVMLEHVQAHVAPTDVDPGAGIQWLPKIHRRSSEVKRTGALLERVFMPCQMYFRYTRHKGGTPELKVKPLKELTFNSPDITAGMTSRQFQVMMDVLTNLLFARTPKKPKSNLSYPLDNDDDNIEEASDAVVPDGVEEVVLAKIGVEVKERARKLLLDDIRALSICGETSHGQSQSPKANDIAWIVTGSRLMLVKQLKKRLVNVRNGRKEAYSMLRTAMQKAAQLRLMEKEKNKSPSFAMRISVRIKKIVWSMLADGKSFSEAEINDMIFEFDRDYKDIGIAQLTTKLFVLKNGLANAKSDTVVSPWNPPAEWGKNAMLRVNAWQGAPTGGNPVIESFLVDIYPLKIYLTEAMYRMMWGYFFPGDEQQPQKRQELFKVSTTAGTRRKKNTSVAETNSPNNQSSKETTFAQKPELRRTSSFDRTWEETVAESVANELVSQMEGQTNTQYEPQDAAKDSKLLRPVRSTREDKKIVEPNELKQSRPQKMMDFRNIKISQVELQLTYEGLPFAVSDVRLLMDTFHREDFTGTWARLFSRVKKHIVWGVLKSVTGMQGKKFKAKSSSQKEPSTALISAADFNLSDSDGDEAGSSDQLPAFLKKPSDGAGDGFATSVKGLFSTQKKKAMAFVLKTMKGDADHDFHGERSENEIEFSPFARQLTITKTKKLIRRHTKKLNKSKVHKVTATELEVAELPPRAPGYNTDSSSDSSSAETSPKD.

Positions 1–43 (MMLGLVQLLVGFVVAWEAVELVLRHGLLLSVFKLAILAALAAA) are cleaved as a signal peptide. Residues 137-158 (STNKKKPAPRKPISTTTAKAKG) are disordered. N-linked (GlcNAc...) asparagine glycans are attached at residues N232, N320, N348, N516, N587, N628, N696, N779, N1171, N1318, and N1459. The tract at residues 305 to 326 (SASTVAEQKDEPSVDNKSAARS) is disordered. Residues 311–326 (EQKDEPSVDNKSAARS) show a composition bias toward basic and acidic residues. A disordered region spans residues 1761 to 1818 (MSKDGALSSVSSTSQPSEPQQIKSSESPPSNGSGKPDLTSSSENALKRSNNSDSEEEG). Residues 1768–1781 (SSVSSTSQPSEPQQ) are compositionally biased toward low complexity. The span at 1782-1812 (IKSSESPPSNGSGKPDLTSSSENALKRSNNS) shows a compositional bias: polar residues. Residues N1791, N1810, N2003, N2280, and N2291 are each glycosylated (N-linked (GlcNAc...) asparagine). Disordered regions lie at residues 2269 to 2312 (VSTT…SSFD) and 2332 to 2361 (EGQTNTQYEPQDAAKDSKLLRPVRSTREDK). The segment covering 2281 to 2300 (TSVAETNSPNNQSSKETTFA) has biased composition (polar residues). 2 stretches are compositionally biased toward basic and acidic residues: residues 2303–2312 (PELRRTSSFD) and 2343–2361 (DAAKDSKLLRPVRSTREDK). N-linked (GlcNAc...) asparagine glycans are attached at residues N2468 and N2564. A disordered region spans residues 2574-2605 (TELEVAELPPRAPGYNTDSSSDSSSAETSPKD).

It belongs to the SABRE family. As to expression, mature pollen-specific.

It localises to the secreted. The protein localises to the golgi apparatus. Its function is as follows. May be involved in membrane trafficking. Required for tip growth in pollen tubes and root hairs. The chain is Protein ABERRANT POLLEN TRANSMISSION 1 from Zea mays (Maize).